Consider the following 92-residue polypeptide: Large ribosomal subunit protein eL43 (92 aa).

The Zn(2+) site is built by Cys-39, Cys-42, Cys-57, and Cys-60.

It belongs to the eukaryotic ribosomal protein eL43 family. Component of the large ribosomal subunit. Mature ribosomes consist of a small (40S) and a large (60S) subunit. The 40S subunit contains 32 different proteins and 1 molecule of RNA (18S). The 60S subunit contains 45 different proteins and 3 molecules of RNA (25S, 5.8S and 5S). The cofactor is Zn(2+).

The protein resides in the cytoplasm. Its function is as follows. Component of the ribosome, a large ribonucleoprotein complex responsible for the synthesis of proteins in the cell. The small ribosomal subunit (SSU) binds messenger RNAs (mRNAs) and translates the encoded message by selecting cognate aminoacyl-transfer RNA (tRNA) molecules. The large subunit (LSU) contains the ribosomal catalytic site termed the peptidyl transferase center (PTC), which catalyzes the formation of peptide bonds, thereby polymerizing the amino acids delivered by tRNAs into a polypeptide chain. The nascent polypeptides leave the ribosome through a tunnel in the LSU and interact with protein factors that function in enzymatic processing, targeting, and the membrane insertion of nascent chains at the exit of the ribosomal tunnel. This is Large ribosomal subunit protein eL43 from Candida albicans (strain SC5314 / ATCC MYA-2876) (Yeast).